The following is a 149-amino-acid chain: MPARKLTFILIIMLSGAAILSGCTSQGEDVKPEPKPEVDEKVTVPNPETTSNISAPMPPLKNSTSPVPPVNDLEGGKEALLDMINRTIDMLEREGARSDIISELESLKEKVSSATSMEELREIMEEFRAIQDDAGIPNPEMPKSAPRAP.

2 disordered regions span residues 24–74 (TSQG…NDLE) and 129–149 (AIQD…PRAP). The span at 28–42 (EDVKPEPKPEVDEKV) shows a compositional bias: basic and acidic residues. Residues 102-131 (SELESLKEKVSSATSMEELREIMEEFRAIQ) adopt a coiled-coil conformation.

This is an uncharacterized protein from Archaeoglobus fulgidus (strain ATCC 49558 / DSM 4304 / JCM 9628 / NBRC 100126 / VC-16).